The chain runs to 579 residues: Aspartate--tRNA(Asp/Asn) ligase (579 aa).

An L-aspartate-binding site is contributed by Glu-171. Residues 195-198 form an aspartate region; that stretch reads QLFK. Position 217 (Arg-217) interacts with L-aspartate. Residues 217–219 and Gln-226 each bind ATP; that span reads RDE. His-444 is an L-aspartate binding site. Glu-475 provides a ligand contact to ATP. Arg-482 contacts L-aspartate. Residue 527–530 coordinates ATP; it reads GLDR.

The protein belongs to the class-II aminoacyl-tRNA synthetase family. Type 1 subfamily. Homodimer.

It is found in the cytoplasm. It carries out the reaction tRNA(Asx) + L-aspartate + ATP = L-aspartyl-tRNA(Asx) + AMP + diphosphate. Its function is as follows. Aspartyl-tRNA synthetase with relaxed tRNA specificity since it is able to aspartylate not only its cognate tRNA(Asp) but also tRNA(Asn). Reaction proceeds in two steps: L-aspartate is first activated by ATP to form Asp-AMP and then transferred to the acceptor end of tRNA(Asp/Asn). The sequence is that of Aspartate--tRNA(Asp/Asn) ligase from Thermotoga maritima (strain ATCC 43589 / DSM 3109 / JCM 10099 / NBRC 100826 / MSB8).